The sequence spans 968 residues: Phosphatidylserine decarboxylase 2 proenzyme (968 aa).

A signal peptide spans 1–25; that stretch reads MAKVMRLIIFVCVALVAISVPAASS. Residues aspartate 500, histidine 570, and serine 683 each act as charge relay system; for autoendoproteolytic cleavage activity in the active site. Catalysis depends on serine 683, which acts as the Schiff-base intermediate with substrate; via pyruvic acid; for decarboxylase activity. Serine 683 bears the Pyruvic acid (Ser); by autocatalysis mark.

This sequence belongs to the phosphatidylserine decarboxylase family. As to quaternary structure, heterodimer of a large membrane-associated beta subunit and a small pyruvoyl-containing alpha subunit. Requires pyruvate as cofactor. Post-translationally, is synthesized initially as an inactive proenzyme. Formation of the active enzyme involves a self-maturation process in which the active site pyruvoyl group is generated from an internal serine residue via an autocatalytic post-translational modification. Two non-identical subunits are generated from the proenzyme in this reaction, and the pyruvate is formed at the N-terminus of the alpha chain, which is derived from the carboxyl end of the proenzyme. The autoendoproteolytic cleavage occurs by a canonical serine protease mechanism, in which the side chain hydroxyl group of the serine supplies its oxygen atom to form the C-terminus of the beta chain, while the remainder of the serine residue undergoes an oxidative deamination to produce ammonia and the pyruvoyl prosthetic group on the alpha chain. During this reaction, the Ser that is part of the protease active site of the proenzyme becomes the pyruvoyl prosthetic group, which constitutes an essential element of the active site of the mature decarboxylase.

The protein resides in the parasitophorous vacuole. Its subcellular location is the cytoplasmic vesicle. It is found in the secretory vesicle. It carries out the reaction a 1,2-diacyl-sn-glycero-3-phospho-L-serine + H(+) = a 1,2-diacyl-sn-glycero-3-phosphoethanolamine + CO2. Its pathway is phospholipid metabolism; phosphatidylethanolamine biosynthesis; phosphatidylethanolamine from CDP-diacylglycerol: step 2/2. In terms of biological role, catalyzes the formation of phosphatidylethanolamine (PtdEtn) from phosphatidylserine (PtdSer). Plays a central role in phospholipid metabolism and in the interorganelle trafficking of phosphatidylserine. Can act on liposomal and host cell PtdSer. In Toxoplasma gondii (strain ATCC 50853 / GT1), this protein is Phosphatidylserine decarboxylase 2 proenzyme.